We begin with the raw amino-acid sequence, 165 residues long: E3 ubiquitin ligase complex SCF subunit sconC (165 aa).

An interaction with the F-box domain of F-box proteins region spans residues 106–165 (ILAANYLDIKALLDVGCKTVANMIKGKSPEEIRKTFNIQNDFTPEEEDQIRRENEWAEDR).

It belongs to the SKP1 family. In terms of assembly, component of the SCF (SKP1-CUL1-F-box protein) E3 ubiquitin ligase complexes.

It functions in the pathway protein modification; protein ubiquitination. In terms of biological role, essential component of the SCF (SKP1-CUL1-F-box protein) E3 ubiquitin ligase complexes, which mediate the ubiquitination and subsequent proteasomal degradation of target proteins. Controls sulfur metabolite repression, probably by mediating the inactivation or degradation of the metR transcription factor. The polypeptide is E3 ubiquitin ligase complex SCF subunit sconC (sconC) (Arthroderma otae (Microsporum canis)).